Consider the following 472-residue polypeptide: GTPase Der (472 aa).

EngA-type G domains lie at 3–166 (AVIA…PPAE) and 178–351 (IPVA…AAAH). Residues 9–16 (GRPNVGKS), 56–60 (DTGGM), 118–121 (NKTD), 184–191 (GRPNVGKS), 231–235 (DTAGV), and 296–299 (NKWD) each bind GTP. Residues 352-436 (RDLATPELND…PVRIECRASD (85 aa)) enclose the KH-like domain. Residues 434 to 472 (ASDNPFADKPNQLTERQRRRRQRVIHHAKKREKKRKRRR) are disordered. Residues 450–472 (QRRRRQRVIHHAKKREKKRKRRR) are compositionally biased toward basic residues.

It belongs to the TRAFAC class TrmE-Era-EngA-EngB-Septin-like GTPase superfamily. EngA (Der) GTPase family. Associates with the 50S ribosomal subunit.

Functionally, GTPase that plays an essential role in the late steps of ribosome biogenesis. In Halorhodospira halophila (strain DSM 244 / SL1) (Ectothiorhodospira halophila (strain DSM 244 / SL1)), this protein is GTPase Der.